The following is a 178-amino-acid chain: MSRIGKRIIEIPSSVQASVEGSKLLFKNNKEKHELETHNRVKITLENNQLSFQPVGEDAQFRAYWGTYGALANNIVIGLSAGFSKTLEVNGVGYKVALGHKTLDLSLGFSHPVKYPIPAGIEMVVEKNTITIKGSDKQQVGQVAAEIRSFRPPEPYKGKGVKYSNEVIIRKAGKTAKK.

Belongs to the universal ribosomal protein uL6 family. In terms of assembly, part of the 50S ribosomal subunit.

Its function is as follows. This protein binds to the 23S rRNA, and is important in its secondary structure. It is located near the subunit interface in the base of the L7/L12 stalk, and near the tRNA binding site of the peptidyltransferase center. This chain is Large ribosomal subunit protein uL6, found in Helicobacter pylori (strain J99 / ATCC 700824) (Campylobacter pylori J99).